A 91-amino-acid polypeptide reads, in one-letter code: Cell division topological specificity factor (91 aa).

It belongs to the MinE family.

Functionally, prevents the cell division inhibition by proteins MinC and MinD at internal division sites while permitting inhibition at polar sites. This ensures cell division at the proper site by restricting the formation of a division septum at the midpoint of the long axis of the cell. The sequence is that of Cell division topological specificity factor from Erwinia tasmaniensis (strain DSM 17950 / CFBP 7177 / CIP 109463 / NCPPB 4357 / Et1/99).